Consider the following 225-residue polypeptide: Testis-expressed protein 30 (225 aa).

In Mus musculus (Mouse), this protein is Testis-expressed protein 30 (Tex30).